Here is a 281-residue protein sequence, read N- to C-terminus: Biotin synthase (281 aa).

Residues 1-230 (MNQKIFLCSI…AQRIMVAGGR (230 aa)) form the Radical SAM core domain. [4Fe-4S] cluster-binding residues include cysteine 18, cysteine 22, and cysteine 25. [2Fe-2S] cluster is bound by residues cysteine 62, cysteine 97, and arginine 223.

Belongs to the radical SAM superfamily. Biotin synthase family. As to quaternary structure, homodimer. The cofactor is [4Fe-4S] cluster. [2Fe-2S] cluster is required as a cofactor.

It carries out the reaction (4R,5S)-dethiobiotin + (sulfur carrier)-SH + 2 reduced [2Fe-2S]-[ferredoxin] + 2 S-adenosyl-L-methionine = (sulfur carrier)-H + biotin + 2 5'-deoxyadenosine + 2 L-methionine + 2 oxidized [2Fe-2S]-[ferredoxin]. It functions in the pathway cofactor biosynthesis; biotin biosynthesis; biotin from 7,8-diaminononanoate: step 2/2. Functionally, catalyzes the conversion of dethiobiotin (DTB) to biotin by the insertion of a sulfur atom into dethiobiotin via a radical-based mechanism. In Sulfurimonas denitrificans (strain ATCC 33889 / DSM 1251) (Thiomicrospira denitrificans (strain ATCC 33889 / DSM 1251)), this protein is Biotin synthase.